Here is a 71-residue protein sequence, read N- to C-terminus: DNA gyrase inhibitor YacG (71 aa).

Zn(2+) contacts are provided by Cys8, Cys11, Cys27, and Cys31. The segment at Val48 to Asn71 is disordered. Residues Gly61–Asn71 show a composition bias toward gly residues.

It belongs to the DNA gyrase inhibitor YacG family. As to quaternary structure, interacts with GyrB. It depends on Zn(2+) as a cofactor.

Inhibits all the catalytic activities of DNA gyrase by preventing its interaction with DNA. Acts by binding directly to the C-terminal domain of GyrB, which probably disrupts DNA binding by the gyrase. In Ralstonia nicotianae (strain ATCC BAA-1114 / GMI1000) (Ralstonia solanacearum), this protein is DNA gyrase inhibitor YacG.